The chain runs to 42 residues: Potassium channel gamma toxin gamma-KTx 1.9 (42 aa).

Cystine bridges form between Cys5-Cys23, Cys11-Cys34, Cys20-Cys39, and Cys24-Cys41.

This sequence belongs to the ergtoxin family. Gamma-KTx 1 subfamily. In terms of tissue distribution, expressed by the venom gland.

The protein localises to the secreted. Functionally, blocks human voltage-gated potassium channel Kv11.1/KCNH2/ERG1 (IC(50)=16.9 nM). The chain is Potassium channel gamma toxin gamma-KTx 1.9 from Centruroides tecomanus (Scorpion).